Here is a 459-residue protein sequence, read N- to C-terminus: Bifunctional protein GlmU (459 aa).

The interval 1 to 229 (MSNFAIILAA…FDESLGVNDR (229 aa)) is pyrophosphorylase. Residues 8-11 (LAAG), lysine 22, glutamine 72, and 77-78 (GT) each bind UDP-N-acetyl-alpha-D-glucosamine. Aspartate 102 provides a ligand contact to Mg(2+). Residues glycine 139, glutamate 154, asparagine 169, and asparagine 227 each coordinate UDP-N-acetyl-alpha-D-glucosamine. Asparagine 227 contacts Mg(2+). The interval 230-250 (VALATAESVMRRRINHKHMVN) is linker. The interval 251 to 459 (GVSFVNPEAT…TRLPHHPKNQ (209 aa)) is N-acetyltransferase. The UDP-N-acetyl-alpha-D-glucosamine site is built by arginine 332 and lysine 350. Histidine 362 functions as the Proton acceptor in the catalytic mechanism. Tyrosine 365 and asparagine 376 together coordinate UDP-N-acetyl-alpha-D-glucosamine. Acetyl-CoA-binding positions include alanine 379, 385 to 386 (NY), serine 404, alanine 422, and arginine 439.

In the N-terminal section; belongs to the N-acetylglucosamine-1-phosphate uridyltransferase family. It in the C-terminal section; belongs to the transferase hexapeptide repeat family. Homotrimer. The cofactor is Mg(2+).

It is found in the cytoplasm. The enzyme catalyses alpha-D-glucosamine 1-phosphate + acetyl-CoA = N-acetyl-alpha-D-glucosamine 1-phosphate + CoA + H(+). It carries out the reaction N-acetyl-alpha-D-glucosamine 1-phosphate + UTP + H(+) = UDP-N-acetyl-alpha-D-glucosamine + diphosphate. It participates in nucleotide-sugar biosynthesis; UDP-N-acetyl-alpha-D-glucosamine biosynthesis; N-acetyl-alpha-D-glucosamine 1-phosphate from alpha-D-glucosamine 6-phosphate (route II): step 2/2. It functions in the pathway nucleotide-sugar biosynthesis; UDP-N-acetyl-alpha-D-glucosamine biosynthesis; UDP-N-acetyl-alpha-D-glucosamine from N-acetyl-alpha-D-glucosamine 1-phosphate: step 1/1. Its pathway is bacterial outer membrane biogenesis; LPS lipid A biosynthesis. In terms of biological role, catalyzes the last two sequential reactions in the de novo biosynthetic pathway for UDP-N-acetylglucosamine (UDP-GlcNAc). The C-terminal domain catalyzes the transfer of acetyl group from acetyl coenzyme A to glucosamine-1-phosphate (GlcN-1-P) to produce N-acetylglucosamine-1-phosphate (GlcNAc-1-P), which is converted into UDP-GlcNAc by the transfer of uridine 5-monophosphate (from uridine 5-triphosphate), a reaction catalyzed by the N-terminal domain. In Streptococcus pneumoniae (strain JJA), this protein is Bifunctional protein GlmU.